Here is a 132-residue protein sequence, read N- to C-terminus: uncharacterized protein (132 aa).

A run of 4 helical transmembrane segments spans residues 7-29 (LALL…PTLF), 44-62 (VFPV…SLFL), 69-88 (LFLS…EFIV), and 108-130 (GVSM…ILIF).

Its subcellular location is the cell membrane. This is an uncharacterized protein from Aquifex aeolicus (strain VF5).